The sequence spans 643 residues: Replication protein E1 (643 aa).

Residues 81–83 (KRK) carry the Nuclear localization signal motif. A phosphoserine; by host mark is found at Ser-87, Ser-91, and Ser-105. Residues 104–113 (ISPRLDAITL) carry the Nuclear export signal motif. The tract at residues 130–166 (LTDSGYGNTEVEAETQVERNGEPEDCGGGGQGRDTEG) is disordered. Residues 181 to 347 (QQHTGTTRVL…QTIVEHGLAD (167 aa)) form a DNA-binding region region. Residues 446 to 596 (IEFIPFLTKL…FPFDRNGNAL (151 aa)) enclose the SF3 helicase domain. Position 472–479 (472–479 (GPPDTGKS)) interacts with ATP. Lys-553 is covalently cross-linked (Glycyl lysine isopeptide (Lys-Gly) (interchain with G-Cter in SUMO)).

The protein belongs to the papillomaviridae E1 protein family. Can form hexamers. Interacts with E2 protein; this interaction increases E1 DNA binding specificity. Interacts with host DNA polymerase subunit POLA2. Interacts with host single stranded DNA-binding protein RPA1. Interacts with host TOP1; this interaction stimulates the enzymatic activity of TOP1. Phosphorylated. In terms of processing, sumoylated.

It is found in the host nucleus. It catalyses the reaction Couples ATP hydrolysis with the unwinding of duplex DNA by translocating in the 3'-5' direction.. It carries out the reaction ATP + H2O = ADP + phosphate + H(+). Its function is as follows. ATP-dependent DNA 3'-5' helicase required for initiation of viral DNA replication. It forms a complex with the viral E2 protein. The E1-E2 complex binds to the replication origin which contains binding sites for both proteins. During the initial step, a dimer of E1 interacts with a dimer of protein E2 leading to a complex that binds the viral origin of replication with high specificity. Then, a second dimer of E1 displaces the E2 dimer in an ATP-dependent manner to form the E1 tetramer. Following this, two E1 monomers are added to each half of the site, which results in the formation of two E1 trimers on the viral ori. Subsequently, two hexamers will be created. The double hexamer acts as a bi-directional helicase machinery and unwinds the viral DNA and then recruits the host DNA polymerase to start replication. The sequence is that of Replication protein E1 from Homo sapiens (Human).